Consider the following 502-residue polypeptide: Histidine--tRNA ligase (502 aa).

The protein belongs to the class-II aminoacyl-tRNA synthetase family. Homodimer.

The protein localises to the cytoplasm. The catalysed reaction is tRNA(His) + L-histidine + ATP = L-histidyl-tRNA(His) + AMP + diphosphate + H(+). This Brucella ovis (strain ATCC 25840 / 63/290 / NCTC 10512) protein is Histidine--tRNA ligase.